A 223-amino-acid chain; its full sequence is Deoxyribose-phosphate aldolase (223 aa).

Asp-89 (proton donor/acceptor) is an active-site residue. The active-site Schiff-base intermediate with acetaldehyde is Lys-152. The active-site Proton donor/acceptor is the Lys-181.

Belongs to the DeoC/FbaB aldolase family. DeoC type 1 subfamily.

It is found in the cytoplasm. It carries out the reaction 2-deoxy-D-ribose 5-phosphate = D-glyceraldehyde 3-phosphate + acetaldehyde. It participates in carbohydrate degradation; 2-deoxy-D-ribose 1-phosphate degradation; D-glyceraldehyde 3-phosphate and acetaldehyde from 2-deoxy-alpha-D-ribose 1-phosphate: step 2/2. Catalyzes a reversible aldol reaction between acetaldehyde and D-glyceraldehyde 3-phosphate to generate 2-deoxy-D-ribose 5-phosphate. The chain is Deoxyribose-phosphate aldolase from Bacillus cytotoxicus (strain DSM 22905 / CIP 110041 / 391-98 / NVH 391-98).